A 40-amino-acid polypeptide reads, in one-letter code: Photosystem II reaction center protein J (40 aa).

A helical membrane pass occupies residues 8–28; that stretch reads IPLWLIGTVTGIPVIGSIGIF.

This sequence belongs to the PsbJ family. In terms of assembly, PSII is composed of 1 copy each of membrane proteins PsbA, PsbB, PsbC, PsbD, PsbE, PsbF, PsbH, PsbI, PsbJ, PsbK, PsbL, PsbM, PsbT, PsbX, PsbY, PsbZ, Psb30/Ycf12, at least 3 peripheral proteins of the oxygen-evolving complex and a large number of cofactors. It forms dimeric complexes.

Its subcellular location is the plastid. The protein resides in the chloroplast thylakoid membrane. Its function is as follows. One of the components of the core complex of photosystem II (PSII). PSII is a light-driven water:plastoquinone oxidoreductase that uses light energy to abstract electrons from H(2)O, generating O(2) and a proton gradient subsequently used for ATP formation. It consists of a core antenna complex that captures photons, and an electron transfer chain that converts photonic excitation into a charge separation. The polypeptide is Photosystem II reaction center protein J (Chloranthus spicatus (Chulantree)).